A 398-amino-acid chain; its full sequence is Fructose-bisphosphate aldolase 2, chloroplastic (398 aa).

A chloroplast-targeting transit peptide spans 1 to 46; it reads MASTSLLKASPVLDKSEWVKGQSVLFRQPSSASVVLRNRATSLTVR. Substrate is bound at residue Arg-95. Ser-157 carries the phosphoserine modification. Lys-185 serves as a coordination point for substrate. At Ser-215 the chain carries Phosphoserine. Glu-225 acts as the Proton acceptor in catalysis. Lys-267 acts as the Schiff-base intermediate with dihydroxyacetone-P in catalysis. 309 to 311 is a substrate binding site; that stretch reads SGG. Lys-394 is modified (N6,N6,N6-trimethyllysine).

Belongs to the class I fructose-bisphosphate aldolase family. Homotetramer. In terms of processing, can be trimethylated at Lys-394 by LSMT-L. The methylation level has no influence on the ologomerization state or on the kinetic properties of the enzyme. Phosphorylated on tyrosine residues in response to abscisic acid (ABA) in germinating seeds. Highly expressed in rosettes leaves.

The protein resides in the plastid. It is found in the chloroplast. The protein localises to the plastoglobule. It localises to the chloroplast stroma. It carries out the reaction beta-D-fructose 1,6-bisphosphate = D-glyceraldehyde 3-phosphate + dihydroxyacetone phosphate. The protein operates within carbohydrate degradation; glycolysis; D-glyceraldehyde 3-phosphate and glycerone phosphate from D-glucose: step 4/4. In terms of biological role, plays a key role in glycolysis and gluconeogenesis. This is Fructose-bisphosphate aldolase 2, chloroplastic from Arabidopsis thaliana (Mouse-ear cress).